Consider the following 350-residue polypeptide: Probable sugar phosphate/phosphate translocator At4g32390 (350 aa).

A run of 10 helical transmembrane segments spans residues I15–Y35, F49–I69, V89–Y109, V112–L132, M146–W166, V168–L188, V205–L225, F235–L255, T263–I283, and T286–N306. Residues Y38–I155 enclose the EamA domain. Positions Q324–D350 are disordered.

Belongs to the TPT transporter family. TPT (TC 2.A.7.9) subfamily.

It is found in the membrane. This chain is Probable sugar phosphate/phosphate translocator At4g32390, found in Arabidopsis thaliana (Mouse-ear cress).